The following is a 36-amino-acid chain: U-metritoxin-Msn1a (36 aa).

Residues 4–36 enclose the ShKT domain; sequence CKDKLPACGEYRGSFCKLEKVKSNCEKTCGVKC. 3 disulfide bridges follow: cysteine 4/cysteine 36, cysteine 11/cysteine 28, and cysteine 19/cysteine 32.

This sequence belongs to the sea anemone type 1 potassium channel toxin family. Type 1b subfamily.

Its subcellular location is the secreted. It is found in the nematocyst. In terms of biological role, has hemolytic activity. Inhibits voltage-gated potassium channels (Kv1/KCNA). In Metridium senile (Brown sea anemone), this protein is U-metritoxin-Msn1a.